The chain runs to 225 residues: Translation initiation factor 6 (225 aa).

This sequence belongs to the eIF-6 family.

In terms of biological role, binds to the 50S ribosomal subunit and prevents its association with the 30S ribosomal subunit to form the 70S initiation complex. In Hyperthermus butylicus (strain DSM 5456 / JCM 9403 / PLM1-5), this protein is Translation initiation factor 6.